A 515-amino-acid chain; its full sequence is Probable cytosol aminopeptidase (515 aa).

Mn(2+) contacts are provided by Lys279 and Asp284. Lys291 is an active-site residue. Mn(2+) is bound by residues Asp302, Asp361, and Glu363. Residue Arg365 is part of the active site.

The protein belongs to the peptidase M17 family. Requires Mn(2+) as cofactor.

Its subcellular location is the cytoplasm. It carries out the reaction Release of an N-terminal amino acid, Xaa-|-Yaa-, in which Xaa is preferably Leu, but may be other amino acids including Pro although not Arg or Lys, and Yaa may be Pro. Amino acid amides and methyl esters are also readily hydrolyzed, but rates on arylamides are exceedingly low.. It catalyses the reaction Release of an N-terminal amino acid, preferentially leucine, but not glutamic or aspartic acids.. Functionally, presumably involved in the processing and regular turnover of intracellular proteins. Catalyzes the removal of unsubstituted N-terminal amino acids from various peptides. This chain is Probable cytosol aminopeptidase, found in Mycobacterium tuberculosis (strain ATCC 25177 / H37Ra).